Here is an 818-residue protein sequence, read N- to C-terminus: MSLWPFGETLSHSGIDSILEEYYLIFRSLEGNETSSTDDKKNEPSMESESEFGTESRDRSDLNQSFIDRILLETALLDELNGAANDRLVDFICLGYFYDDRSQQVRHMDYLVDMLMAYLKDIDRTGYRTPFLLENSFHQTGEYEDQDDEDPMLYVNIISSIFCSKSAPIVEALVQNTPFLSSLFEVFQFENIEAENCPILAVFLKINETLLFEQTSSYLEFFKSQPNIVDKFLYHIEVSPLVEFLIKIMLTDQVESPTNIIDFLYHQDLIPKCLNLLENSKYSPGIQNSSGELLKALISISTNFKLDTLWIGPNRLTRQLASPQYVDQLINIILFQRGHAMGVAVSIIIELIRKNNSDYDEVDLLSTTIVDNPPSQRDPVYLGHLLYELTMHMEDFYALLIKLENDDDDDHDTASKALPSVKHHLLENQLHESFRPLGFERVKITELISEMLHCSNMGLMNSKRGEKIARTRDKCRDTLDQNSLEKAMKNLNINDNTITSNTLEDKCNNNDSNDSNDNQKQKKNIKKKFHDNELYSTFDTSDDNIDDDDDMSFEIPYVSETQNLKIRKNPTIGDLFKIKLHDLGFFPKFLQLFLRYPWNNFWHNIVFDIIQQIFNGRMDFSYNSFLVYSLFDFKKSTRFIPKPLYGSNQKLPVKDFHIISDFILQGHKDSFEFYEKEKTNLGYMGQLVLIAEEIAKYSKIYKTDLIAPDIYAFLQDEVWMSYSSDILNETRTMCSIILGGGQFCAESDENTNQDFLEKADMSKPAHPSTMDENEIVHEEDVKLHDKVAELIDELGQLTELDIHDKIKDVIVDHHSDLN.

Disordered stretches follow at residues 33–60 (ETSS…RDRS) and 499–526 (TSNT…KNIK). The segment covering 509–518 (NNDSNDSNDN) has biased composition (low complexity).

This sequence belongs to the SAPS family. Post-translationally, hyperphosphorylated in the absence of SIT4.

In terms of biological role, associates with the SIT4 phosphatase in a cell cycle dependent manner. May be directly or indirectly involved in SIT4-dependent functions in budding and in normal G1 cyclin expression. This is SIT4-associating protein SAP4 (SAP4) from Saccharomyces cerevisiae (strain ATCC 204508 / S288c) (Baker's yeast).